Consider the following 257-residue polypeptide: Receptor expression-enhancing protein 4 (257 aa).

Transmembrane regions (helical) follow at residues 1 to 21 and 42 to 62; these read MVSWMICRLVVLVFGMLCPAY and WIVFALFMAAEIITDIFISWF. Phosphoserine is present on residues Ser152 and Ser194. The disordered stretch occupies residues 178 to 257; sequence PHQRPPIGYR…KKTVPSDMDS (80 aa). The residue at position 196 (Thr196) is a Phosphothreonine. A Phosphoserine modification is found at Ser202. Thr250 carries the phosphothreonine modification. At Ser253 the chain carries Phosphoserine.

The protein belongs to the DP1 family.

The protein localises to the endoplasmic reticulum membrane. Microtubule-binding protein required to ensure proper cell division and nuclear envelope reassembly by sequestering the endoplasmic reticulum away from chromosomes during mitosis. Probably acts by clearing the endoplasmic reticulum membrane from metaphase chromosomes. The sequence is that of Receptor expression-enhancing protein 4 (REEP4) from Pongo abelii (Sumatran orangutan).